Reading from the N-terminus, the 105-residue chain is Small ribosomal subunit protein uS10 (105 aa).

Belongs to the universal ribosomal protein uS10 family. In terms of assembly, part of the 30S ribosomal subunit.

Its function is as follows. Involved in the binding of tRNA to the ribosomes. This is Small ribosomal subunit protein uS10 from Trichormus variabilis (strain ATCC 29413 / PCC 7937) (Anabaena variabilis).